The sequence spans 215 residues: Pyridoxine/pyridoxamine 5'-phosphate oxidase (215 aa).

Residues 9 to 12 and K69 each bind substrate; that span reads RRDY. FMN is bound by residues 64 to 69, 79 to 80, K86, and Q108; these read RVLLLK and FT. Substrate is bound by residues Y126, R130, and S134. Residues 143–144 and W188 contribute to the FMN site; that span reads QS. A substrate-binding site is contributed by 194–196; it reads RLH. R198 serves as a coordination point for FMN.

Belongs to the pyridoxamine 5'-phosphate oxidase family. In terms of assembly, homodimer. FMN is required as a cofactor.

It carries out the reaction pyridoxamine 5'-phosphate + O2 + H2O = pyridoxal 5'-phosphate + H2O2 + NH4(+). The enzyme catalyses pyridoxine 5'-phosphate + O2 = pyridoxal 5'-phosphate + H2O2. It functions in the pathway cofactor metabolism; pyridoxal 5'-phosphate salvage; pyridoxal 5'-phosphate from pyridoxamine 5'-phosphate: step 1/1. The protein operates within cofactor metabolism; pyridoxal 5'-phosphate salvage; pyridoxal 5'-phosphate from pyridoxine 5'-phosphate: step 1/1. Catalyzes the oxidation of either pyridoxine 5'-phosphate (PNP) or pyridoxamine 5'-phosphate (PMP) into pyridoxal 5'-phosphate (PLP). In Pseudomonas syringae pv. tomato (strain ATCC BAA-871 / DC3000), this protein is Pyridoxine/pyridoxamine 5'-phosphate oxidase.